The primary structure comprises 280 residues: MNEIFKTLQIIAKKISEEVKYADFGYTNHQNSTGDTQLKLDVKSDSIIEAEFRKISSVKSLVSEEKEDELVLNENAKFIIAYDPLDGSSLVDVNFAVGSIFGIYENEIKAENLKAAAYIIYGPRLEMVFTDGNAPKFYRLQKDGNFAFINELKLENKGKLNATGATQKNWSQTHRNFIRSLFDEGYRLRYSGAMVADLHQILMKKGGIFSYPATSDHPNGKLRVSFEVLPFAFIYEKAGGATSDGKSQSLFSIKISKIHQTTPCFFGSKYEIERLHEIYG.

Mg(2+) contacts are provided by Glu64, Asp83, Leu85, and Asp86. Substrate contacts are provided by residues 86 to 89, Tyr190, and Lys221; that span reads DGSS. Glu227 is a Mg(2+) binding site.

Belongs to the FBPase class 1 family. In terms of assembly, homotetramer. The cofactor is Mg(2+).

The protein localises to the cytoplasm. It carries out the reaction beta-D-fructose 1,6-bisphosphate + H2O = beta-D-fructose 6-phosphate + phosphate. The protein operates within carbohydrate biosynthesis; gluconeogenesis. The polypeptide is Fructose-1,6-bisphosphatase class 1 (Campylobacter hominis (strain ATCC BAA-381 / DSM 21671 / CCUG 45161 / LMG 19568 / NCTC 13146 / CH001A)).